We begin with the raw amino-acid sequence, 392 residues long: S-adenosylmethionine synthase (392 aa).

His-17 is a binding site for ATP. Asp-19 contributes to the Mg(2+) binding site. Residue Glu-45 participates in K(+) binding. L-methionine-binding residues include Glu-58 and Gln-102. The flexible loop stretch occupies residues 102–112 (QSADIAQGVDA). ATP-binding positions include 169–171 (DAK), 235–236 (KF), Asp-244, 250–251 (RK), Ala-267, and Lys-271. Asp-244 is a binding site for L-methionine. Lys-275 is an L-methionine binding site.

Belongs to the AdoMet synthase family. Homotetramer; dimer of dimers. It depends on Mg(2+) as a cofactor. The cofactor is K(+).

It localises to the cytoplasm. The enzyme catalyses L-methionine + ATP + H2O = S-adenosyl-L-methionine + phosphate + diphosphate. Its pathway is amino-acid biosynthesis; S-adenosyl-L-methionine biosynthesis; S-adenosyl-L-methionine from L-methionine: step 1/1. Functionally, catalyzes the formation of S-adenosylmethionine (AdoMet) from methionine and ATP. The overall synthetic reaction is composed of two sequential steps, AdoMet formation and the subsequent tripolyphosphate hydrolysis which occurs prior to release of AdoMet from the enzyme. This chain is S-adenosylmethionine synthase, found in Methylobacterium nodulans (strain LMG 21967 / CNCM I-2342 / ORS 2060).